The following is a 189-amino-acid chain: Large ribosomal subunit protein bL9 (189 aa).

It belongs to the bacterial ribosomal protein bL9 family.

Binds to the 23S rRNA. The chain is Large ribosomal subunit protein bL9 from Brucella ovis (strain ATCC 25840 / 63/290 / NCTC 10512).